The sequence spans 298 residues: Ribosomal RNA small subunit methyltransferase A (298 aa).

Residues Asn-35, Leu-37, Gly-62, Glu-83, Asp-108, and Asn-133 each coordinate S-adenosyl-L-methionine.

The protein belongs to the class I-like SAM-binding methyltransferase superfamily. rRNA adenine N(6)-methyltransferase family. RsmA subfamily.

It is found in the cytoplasm. It catalyses the reaction adenosine(1518)/adenosine(1519) in 16S rRNA + 4 S-adenosyl-L-methionine = N(6)-dimethyladenosine(1518)/N(6)-dimethyladenosine(1519) in 16S rRNA + 4 S-adenosyl-L-homocysteine + 4 H(+). Specifically dimethylates two adjacent adenosines (A1518 and A1519) in the loop of a conserved hairpin near the 3'-end of 16S rRNA in the 30S particle. May play a critical role in biogenesis of 30S subunits. The chain is Ribosomal RNA small subunit methyltransferase A from Streptococcus pyogenes serotype M12 (strain MGAS9429).